The following is a 204-amino-acid chain: Pantothenate transporter PanT (204 aa).

The next 6 helical transmembrane spans lie at 18–38 (IILL…AVIV), 39–59 (GAQP…LGAR), 63–83 (FIGG…PGSI), 86–106 (LMFQ…LIIG), 123–143 (LGLG…VVLL), and 176–196 (IFEI…LVPI).

In E.coli forms a stable energy-coupling factor (ECF) transporter complex probably composed of a membrane-embedded substrate-binding protein (S component), two ATP-binding proteins (A components) and a transmembrane protein (T component).

Its subcellular location is the cell membrane. Probable pantothenate-binding protein that interacts with the energy-coupling factor (ECF) ABC-transporter complex. Unlike classic ABC transporters this ECF transporter provides the energy necessary to transport a number of different substrates. The substrates themselves are bound by transmembrane, not extracytoplasmic soluble proteins and transport it into cells. Upon coexpression with its energy-coupling factor (ECF) ABC-transporter complex EcfA1A2T in E.coli allows pantothenate uptake; uptake requires both PanT and EcfA1A2T. In Leuconostoc mesenteroides subsp. mesenteroides (strain ATCC 8293 / DSM 20343 / BCRC 11652 / CCM 1803 / JCM 6124 / NCDO 523 / NBRC 100496 / NCIMB 8023 / NCTC 12954 / NRRL B-1118 / 37Y), this protein is Pantothenate transporter PanT (panT).